A 315-amino-acid chain; its full sequence is Porphobilinogen deaminase (315 aa).

At C242 the chain carries S-(dipyrrolylmethanemethyl)cysteine.

Belongs to the HMBS family. Monomer. It depends on dipyrromethane as a cofactor.

It catalyses the reaction 4 porphobilinogen + H2O = hydroxymethylbilane + 4 NH4(+). It functions in the pathway porphyrin-containing compound metabolism; protoporphyrin-IX biosynthesis; coproporphyrinogen-III from 5-aminolevulinate: step 2/4. Functionally, tetrapolymerization of the monopyrrole PBG into the hydroxymethylbilane pre-uroporphyrinogen in several discrete steps. This chain is Porphobilinogen deaminase, found in Syntrophotalea carbinolica (strain DSM 2380 / NBRC 103641 / GraBd1) (Pelobacter carbinolicus).